Consider the following 447-residue polypeptide: Na(+)-translocating NADH-quinone reductase subunit A (447 aa).

Belongs to the NqrA family. In terms of assembly, composed of six subunits; NqrA, NqrB, NqrC, NqrD, NqrE and NqrF.

It catalyses the reaction a ubiquinone + n Na(+)(in) + NADH + H(+) = a ubiquinol + n Na(+)(out) + NAD(+). In terms of biological role, NQR complex catalyzes the reduction of ubiquinone-1 to ubiquinol by two successive reactions, coupled with the transport of Na(+) ions from the cytoplasm to the periplasm. NqrA to NqrE are probably involved in the second step, the conversion of ubisemiquinone to ubiquinol. The polypeptide is Na(+)-translocating NADH-quinone reductase subunit A (Haemophilus influenzae (strain PittEE)).